Here is a 248-residue protein sequence, read N- to C-terminus: Probable transcriptional regulator LumQ (248 aa).

The HTH araC/xylS-type domain occupies 148-246 (VLIDNYIEQH…GMSPTRYQFF (99 aa)). 2 DNA-binding regions (H-T-H motif) span residues 165–186 (AELS…KSQM) and 213–236 (LSQV…RRLY).

In terms of biological role, probable transcriptional regulator. Its target gene(s) is not yet known. The polypeptide is Probable transcriptional regulator LumQ (lumQ) (Photobacterium leiognathi).